Reading from the N-terminus, the 20-residue chain is Unknown protein NF015 from 2D-PAGE (20 aa).

The segment at 1-20 (TPQIQKPAPQFSKTALLPDE) is disordered.

This Naegleria fowleri (Brain eating amoeba) protein is Unknown protein NF015 from 2D-PAGE.